Consider the following 78-residue polypeptide: NAD(P)H-quinone oxidoreductase subunit O (78 aa).

This sequence belongs to the complex I NdhO subunit family. NDH-1 can be composed of about 15 different subunits; different subcomplexes with different compositions have been identified which probably have different functions.

Its subcellular location is the cellular thylakoid membrane. The catalysed reaction is a plastoquinone + NADH + (n+1) H(+)(in) = a plastoquinol + NAD(+) + n H(+)(out). It carries out the reaction a plastoquinone + NADPH + (n+1) H(+)(in) = a plastoquinol + NADP(+) + n H(+)(out). Its function is as follows. NDH-1 shuttles electrons from an unknown electron donor, via FMN and iron-sulfur (Fe-S) centers, to quinones in the respiratory and/or the photosynthetic chain. The immediate electron acceptor for the enzyme in this species is believed to be plastoquinone. Couples the redox reaction to proton translocation, and thus conserves the redox energy in a proton gradient. Cyanobacterial NDH-1 also plays a role in inorganic carbon-concentration. The polypeptide is NAD(P)H-quinone oxidoreductase subunit O (Prochlorococcus marinus (strain MIT 9312)).